The following is a 476-amino-acid chain: MSQATVEEKSKLRVIIVGGSVAGLTLAHCLAKANIDHIVLEKRAEISPQEGAFIGIWPNGARILDQLGLYDDFESLMPPVHRMNVRFPDGFTFSSFLPRTIQERFGYPIISIDRQKVLETLYERYPHKSNVLVNKKVMNVRLLGKGVSVVTEDGSAYNGDIVVGADGIHSRIRSEMWRLADENHPGLITSEDKQAFTVEYACVFGISEQLPSLRAGEHINSYSNGLCVITFHGEKGRIFWFLLVKLPKKTTYPNTPRFSAGDAASVCNNFATFRVSEDVCVSDLWMHKLCASMTALEEGILERWHYDRIVLLGDSVHKMTPNIGQGANTALEDASVLASLLNNLSKLSTEDGTSAYAMTKLLDEFQSTRYERAKNTHDKSRFGARLHTRDDMIKTLIGRYVFPYAGPRVLERSVKSLATAHSVEYLPFSKRLGPAWGEYSSRTKSTLGSTPIQMLTLLLPCLFYFMYSKLNLSLSS.

3 residues coordinate FAD: glutamate 41, glycine 55, and arginine 114. Tyrosine 222 is an active-site residue. FAD contacts are provided by aspartate 314 and alanine 327. Asparagine 343 carries N-linked (GlcNAc...) asparagine glycosylation. The chain crosses the membrane as a helical span at residues 447 to 467 (LGSTPIQMLTLLLPCLFYFMY). Residue asparagine 471 is glycosylated (N-linked (GlcNAc...) asparagine).

This sequence belongs to the paxM FAD-dependent monooxygenase family. It depends on FAD as a cofactor.

It localises to the membrane. The protein operates within secondary metabolite biosynthesis; terpenoid biosynthesis. In terms of biological role, FAD-dependent monooxygenase; part of the gene cluster that mediates the biosynthesis of paraherquonin, a meroterpenoid with a unique, highly congested hexacyclic molecular architecture. The first step of the pathway is the synthesis of 3,5-dimethylorsellinic acid (DMOA) by the polyketide synthase prhL. Synthesis of DMOA is followed by farnesylation by the prenyltransferase prhE, methylesterification by the methyl-transferase prhM, epoxidation of the prenyl chain by the flavin-dependent monooxygenase prhF, and cyclization of the farnesyl moiety by the terpene cyclase prhH, to yield the tetracyclic intermediate, protoaustinoid A. The short chain dehydrogenase prhI then oxidizes the C-3 alcohol group of the terpene cyclase product to transform protoaustinoid A into protoaustinoid B. The FAD-binding monooxygenase prhJ catalyzes the oxidation of protoaustinoid B into preaustinoid A which is further oxidized into preaustinoid A1 by FAD-binding monooxygenase phrK. Finally, prhA leads to berkeleydione via the berkeleyone B intermediate. PrhA is a multifunctional dioxygenase that first desaturates at C5-C6 to form berkeleyone B, followed by rearrangement of the A/B-ring to form the cycloheptadiene moiety in berkeleydione. Berkeleydione serves as the key intermediate for the biosynthesis of paraherquonin as well as many other meroterpenoids. The cytochrome P450 monooxygenases prhB, prhD, and prhN, as well as the isomerase prhC, are probably involved in the late stage of paraherquonin biosynthesis, after the production of berkeleydione. Especially prhC might be a multifunctional enzyme that catalyzes the D-ring expansion via intramolecular methoxy rearrangement, as well as the hydrolysis of the expanded D-ring. This is FAD-dependent monooxygenase prhF from Penicillium brasilianum.